The following is a 31-amino-acid chain: PTEN upstream open reading frame MP31 (31 aa).

Interacts with lactate dehydrogenases LDHA and LDHB; interaction with mitochondrial LDH leads to inhibition of lactate dehydrogenase activity, preventing conversion of lactate to pyruvate. In terms of tissue distribution, expressed in brain (at protein level). Expressed at lower levels in glioblastomas than in normal brain tissue (at protein level).

It localises to the mitochondrion. In terms of biological role, inhibits lactate dehydrogenase (LDH)-mediated conversion of lactate to pyruvate in mitochondria by competing with mitochondrial LDH for binding to NAD(+). Also inhibits cellular lactate utilization. The sequence is that of PTEN upstream open reading frame MP31 from Homo sapiens (Human).